A 108-amino-acid chain; its full sequence is Thiosulfate sulfurtransferase GlpE (108 aa).

Positions 17-105 constitute a Rhodanese domain; it reads HQGTAVLVDI…WHRHFPSEVA (89 aa). Cys-65 (cysteine persulfide intermediate) is an active-site residue.

The protein belongs to the GlpE family.

It localises to the cytoplasm. It catalyses the reaction thiosulfate + hydrogen cyanide = thiocyanate + sulfite + 2 H(+). The enzyme catalyses thiosulfate + [thioredoxin]-dithiol = [thioredoxin]-disulfide + hydrogen sulfide + sulfite + 2 H(+). Transferase that catalyzes the transfer of sulfur from thiosulfate to thiophilic acceptors such as cyanide or dithiols. May function in a CysM-independent thiosulfate assimilation pathway by catalyzing the conversion of thiosulfate to sulfite, which can then be used for L-cysteine biosynthesis. This chain is Thiosulfate sulfurtransferase GlpE, found in Citrobacter koseri (strain ATCC BAA-895 / CDC 4225-83 / SGSC4696).